Consider the following 188-residue polypeptide: Thymidine kinase (188 aa).

17–24 (GPMFAGKT) contributes to the ATP binding site. The active-site Proton acceptor is the glutamate 92. Phenylalanine 121 provides a ligand contact to substrate. 2 residues coordinate Zn(2+): cysteine 146 and cysteine 149. Residue 166–170 (LILAG) coordinates substrate. Zn(2+)-binding residues include cysteine 179 and cysteine 182.

Belongs to the thymidine kinase family.

It carries out the reaction thymidine + ATP = dTMP + ADP + H(+). Its function is as follows. Phosphorylates thymidine. ASFV replicates in the cytoplasm of infected cells and contains genes encoding a number of enzymes needed for DNA synthesis, including thymidine kinase. Important for growth in swine macrophages in vitro and is a virus virulence factor in swine. The protein is Thymidine kinase of African swine fever virus (isolate Tick/South Africa/Pretoriuskop Pr4/1996) (ASFV).